The primary structure comprises 380 residues: Ankyrin repeat domain-containing protein 63 (380 aa).

ANK repeat units lie at residues 11 to 40 (AGTR…RSII), 46 to 79 (QGRT…AVNL), 83 to 112 (RGRT…DPEA), 116 to 145 (AGNS…RLGL), and 153 to 182 (AGLT…RAAA). 2 stretches are compositionally biased toward low complexity: residues 181–203 (AAAA…PAAS) and 216–226 (RPLLARFARAA). The segment at 181-256 (AAAAAARGSN…GSERPELGRS (76 aa)) is disordered. At serine 193 the chain carries Phosphoserine. A Phosphoserine modification is found at serine 294. The disordered stretch occupies residues 309–368 (PIGLSPHPEGGPGSGRLGLRRRSTAPDIPSLVGEAPGPESGPELEANALSVSVPGPNPWQ).

The protein is Ankyrin repeat domain-containing protein 63 of Homo sapiens (Human).